The following is a 124-amino-acid chain: Large ribosomal subunit protein bL21 (124 aa).

It belongs to the bacterial ribosomal protein bL21 family. Part of the 50S ribosomal subunit. Contacts protein L20.

In terms of biological role, this protein binds to 23S rRNA in the presence of protein L20. This is Large ribosomal subunit protein bL21 from Synechococcus sp. (strain WH7803).